The following is a 154-amino-acid chain: RING finger protein 11 (154 aa).

Residues 1–12 (MGNCLKSPTSDD) show a composition bias toward polar residues. Residues 1-53 (MGNCLKSPTSDDISLLHESQSDRASFGEGTEPDQEPPPPYQEQVPVPVYHPTP) are disordered. Gly-2 carries the N-myristoyl glycine lipid modification. A lipid anchor (S-palmitoyl cysteine) is attached at Cys-4. Phosphoserine occurs at positions 14 and 25. Residues 37-40 (PPPY) carry the PPxY motif motif. Residues 41–51 (QEQVPVPVYHP) are compositionally biased toward low complexity. The segment at 99–140 (CVICMMDFVYGDPIRFLPCMHIYHLDCIDDWLMRSFTCPSCM) adopts an RING-type zinc-finger fold. Residue Thr-135 is modified to Phosphothreonine; by PKB/AKT1.

Interacts (when phosphorylated) with 14-3-3. Interacts with the E3 ubiquitin-ligases NEDD4, ITCH, SMURF2 and WWP1. Also interacts with the E2 ubiquitin-conjugating enzymes UBE2D1 and UBE2N, but neither with CDC34, nor with UBE2L3. Interacts with ZNF350, EPS15 and STAMBP. After TNF stimulation, interacts with TAX1BP1, TNFAIP3 and RIPK1; these interactions are transient and they are lost after 1 hour of stimulation with TNF. Interacts with GGA1. Post-translationally, ubiquitinated in the presence of ITCH, SMURF2 and UBE2D1, as well as WWP1. Phosphorylation by PKB/AKT1 may accelerate degradation by the proteasome. In terms of processing, acylation at both Gly-2 and Cys-4 is required for proper localization to the endosomes.

It is found in the early endosome. The protein localises to the recycling endosome. The protein resides in the cytoplasm. It localises to the nucleus. In terms of biological role, essential component of a ubiquitin-editing protein complex, comprising also TNFAIP3, ITCH and TAX1BP1, that ensures the transient nature of inflammatory signaling pathways. Promotes the association of TNFAIP3 to RIPK1 after TNF stimulation. TNFAIP3 deubiquitinates 'Lys-63' polyubiquitin chains on RIPK1 and catalyzes the formation of 'Lys-48'-polyubiquitin chains. This leads to RIPK1 proteasomal degradation and consequently termination of the TNF- or LPS-mediated activation of NF-kappa-B. Recruits STAMBP to the E3 ubiquitin-ligase SMURF2 for ubiquitination, leading to its degradation by the 26S proteasome. This is RING finger protein 11 (RNF11) from Bos taurus (Bovine).